The primary structure comprises 276 residues: MHPAAEHSPLGKSSEYIATYTPSLLFPIPRLAKWAELGVSGDALPWQGVDYWNCFELSWLLPSGKPVVAIGEFAIPCDSPNIIESKSFKLYLNSLNQTKFESVAQLQACLAKDLSAAAGKVVAVKVSTLADVEAQGVTTLPGQCIDALDVTIDNYEQPQPELLRCSTERVVEETVHSHLLKSNCPVTGQPDWGSVVVEYKGRALDHASLLTYLISFRQHADFHEQCVERIYLDLKKLLQPEYLTVYARYVRRGGLDINPYRSTRAISPENLRLVRQ.

Residue 83–85 (IES) participates in substrate binding. Residue 85–86 (SK) coordinates NADPH. The active-site Thioimide intermediate is C184. D191 serves as the catalytic Proton donor. 223-224 (HE) contributes to the substrate binding site. Residue 252-253 (RG) participates in NADPH binding.

This sequence belongs to the GTP cyclohydrolase I family. QueF type 2 subfamily. In terms of assembly, homodimer.

It is found in the cytoplasm. It catalyses the reaction 7-aminomethyl-7-carbaguanine + 2 NADP(+) = 7-cyano-7-deazaguanine + 2 NADPH + 3 H(+). It functions in the pathway tRNA modification; tRNA-queuosine biosynthesis. Catalyzes the NADPH-dependent reduction of 7-cyano-7-deazaguanine (preQ0) to 7-aminomethyl-7-deazaguanine (preQ1). This Pseudomonas entomophila (strain L48) protein is NADPH-dependent 7-cyano-7-deazaguanine reductase.